The primary structure comprises 432 residues: D-amino acid dehydrogenase (432 aa).

3–17 (VVILGSGVVGVTSAW) is an FAD binding site.

Belongs to the DadA oxidoreductase family. The cofactor is FAD.

It catalyses the reaction a D-alpha-amino acid + A + H2O = a 2-oxocarboxylate + AH2 + NH4(+). Its pathway is amino-acid degradation; D-alanine degradation; NH(3) and pyruvate from D-alanine: step 1/1. Functionally, oxidative deamination of D-amino acids. This Salmonella choleraesuis (strain SC-B67) protein is D-amino acid dehydrogenase.